Here is a 197-residue protein sequence, read N- to C-terminus: Holliday junction branch migration complex subunit RuvA (197 aa).

Residues 1-63 (MINKIHGKVI…ENELKLFGFL (63 aa)) are domain I. Residues 64 to 139 (NSDEREIFKE…KLLINSELES (76 aa)) are domain II. A region of interest (flexible linker) is located at residue S139. A domain III region spans residues 140-197 (TGLFRFKELEESIVSMGFDRKIVNSKIREAFNLAEFANLKDSEKEQFLFKEVLKRISN).

Belongs to the RuvA family. In terms of assembly, homotetramer. Forms an RuvA(8)-RuvB(12)-Holliday junction (HJ) complex. HJ DNA is sandwiched between 2 RuvA tetramers; dsDNA enters through RuvA and exits via RuvB. An RuvB hexamer assembles on each DNA strand where it exits the tetramer. Each RuvB hexamer is contacted by two RuvA subunits (via domain III) on 2 adjacent RuvB subunits; this complex drives branch migration. In the full resolvosome a probable DNA-RuvA(4)-RuvB(12)-RuvC(2) complex forms which resolves the HJ.

The protein resides in the cytoplasm. In terms of biological role, the RuvA-RuvB-RuvC complex processes Holliday junction (HJ) DNA during genetic recombination and DNA repair, while the RuvA-RuvB complex plays an important role in the rescue of blocked DNA replication forks via replication fork reversal (RFR). RuvA specifically binds to HJ cruciform DNA, conferring on it an open structure. The RuvB hexamer acts as an ATP-dependent pump, pulling dsDNA into and through the RuvAB complex. HJ branch migration allows RuvC to scan DNA until it finds its consensus sequence, where it cleaves and resolves the cruciform DNA. The protein is Holliday junction branch migration complex subunit RuvA of Borreliella burgdorferi (strain ATCC 35210 / DSM 4680 / CIP 102532 / B31) (Borrelia burgdorferi).